Consider the following 119-residue polypeptide: uncharacterized protein (119 aa).

2 consecutive transmembrane segments (helical) span residues 61–80 and 87–103; these read LISASSCSSLVSSPFFLLSV and VVGVVVIDGFVVSVDII.

It localises to the membrane. This is an uncharacterized protein from Saccharomyces cerevisiae (strain ATCC 204508 / S288c) (Baker's yeast).